A 96-amino-acid polypeptide reads, in one-letter code: Small ribosomal subunit protein bS6 (96 aa).

Belongs to the bacterial ribosomal protein bS6 family.

Functionally, binds together with bS18 to 16S ribosomal RNA. The sequence is that of Small ribosomal subunit protein bS6 from Synechococcus sp. (strain JA-2-3B'a(2-13)) (Cyanobacteria bacterium Yellowstone B-Prime).